Here is a 38-residue protein sequence, read N- to C-terminus: Cytochrome b6-f complex subunit 5 (38 aa).

A helical membrane pass occupies residues 5 to 25 (LVLGIVLGLIPITLAGLFVAA).

This sequence belongs to the PetG family. In terms of assembly, the 4 large subunits of the cytochrome b6-f complex are cytochrome b6, subunit IV (17 kDa polypeptide, PetD), cytochrome f and the Rieske protein, while the 4 small subunits are PetG, PetL, PetM and PetN. The complex functions as a dimer.

It is found in the cellular thylakoid membrane. Component of the cytochrome b6-f complex, which mediates electron transfer between photosystem II (PSII) and photosystem I (PSI), cyclic electron flow around PSI, and state transitions. PetG is required for either the stability or assembly of the cytochrome b6-f complex. The sequence is that of Cytochrome b6-f complex subunit 5 from Microcystis aeruginosa (strain NIES-843 / IAM M-2473).